The chain runs to 147 residues: MDEFDRRLLNRLQHGLPLEPHPYALLAAELDCREEDILRRLDDLLDDGTLTRFGPLFDIEPLGGAFTLAAMSVPEARFEEIAALLAGWPQVAHNYRREHALNMWLVVACDSPAEVAETLARLERESGLAVLDLPKEATYHVGLHFPL.

It belongs to the Ahb/Nir family. As to quaternary structure, probably forms a complex composed of NirD, NirL, NirG and NirH. All proteins are required for the total conversion of siroheme to didecarboxysiroheme.

The catalysed reaction is siroheme + 2 H(+) = 12,18-didecarboxysiroheme + 2 CO2. Its pathway is porphyrin-containing compound metabolism. In terms of biological role, involved in heme d1 biosynthesis. Catalyzes the decarboxylation of siroheme into didecarboxysiroheme. This Pseudomonas aeruginosa (strain ATCC 15692 / DSM 22644 / CIP 104116 / JCM 14847 / LMG 12228 / 1C / PRS 101 / PAO1) protein is Siroheme decarboxylase NirG subunit.